The chain runs to 298 residues: Mitochondrial dicarboxylate/tricarboxylate transporter DTC (298 aa).

3 Solcar repeats span residues 12–93, 103–194, and 202–292; these read WTTV…LTAK, LPLY…SAEY, and GEMS…ITKF. Helical transmembrane passes span 18-38, 68-88, 109-129, 169-189, 208-228, and 268-288; these read FVNG…IDMI, GLSA…GSFK, ALCG…ADLA, GCGP…ASYD, VGAS…FDFV, and FPVY…FLNQ.

It belongs to the mitochondrial carrier (TC 2.A.29) family. As to expression, highly expressed in flower buds and at lower levels in roots, leaves and stems.

The protein localises to the mitochondrion inner membrane. Functionally, catalyzes the transport of dicarboxylates, such as oxoglutarate, oxaloacetate, malate, and succinate, and of tricarboxylates, such as citrate, isocitrate, cis-aconitate, and trans-aconitate by a counter-exchange mechanism across the inner mitochondrial membrane. Substrate preference in reconstituted proteoliposomes is oxaloacetate &gt; malonate &gt; malate &gt; maleate &gt; succinate &gt; oxoglutarate &gt; citrate &gt; trans-aconitate &gt; cis-aconitate &gt; sulfate &gt; isocitrate. May be important for plant metabolic functions requiring organic acid flux to or from the mitochondria, such as nitrogen assimilation, export of reducing equivalents from the mitochondria, and fatty acid elongation. The sequence is that of Mitochondrial dicarboxylate/tricarboxylate transporter DTC (DTC) from Arabidopsis thaliana (Mouse-ear cress).